Consider the following 225-residue polypeptide: Thymidylate kinase (225 aa).

10-17 (GVEGGGKT) lines the ATP pocket.

The protein belongs to the thymidylate kinase family.

It carries out the reaction dTMP + ATP = dTDP + ADP. Phosphorylation of dTMP to form dTDP in both de novo and salvage pathways of dTTP synthesis. The protein is Thymidylate kinase of Trichodesmium erythraeum (strain IMS101).